Consider the following 43-residue polypeptide: uncharacterized protein (43 aa).

An N-terminal signal peptide occupies residues 1-17; that stretch reads MYRRLLLNLFCMVFLQA.

This is an uncharacterized protein from Helicobacter pylori (strain J99 / ATCC 700824) (Campylobacter pylori J99).